Consider the following 420-residue polypeptide: Phosphoglycerate kinase, cytosolic (420 aa).

Val-23, Asp-24, Phe-25, Asn-26, Arg-39, Ser-61, His-62, Gly-64, Arg-65, Arg-135, His-171, and Arg-172 together coordinate (2R)-3-phosphoglycerate. Gly-217 provides a ligand contact to ADP. Gly-217 lines the CDP pocket. Lys-219 provides a ligand contact to (2R)-3-phosphoglycerate. Position 219 (Lys-219) interacts with AMP. Asp-222 serves as a coordination point for CDP. Asp-222 provides a ligand contact to Mg(2+). 2 residues coordinate ADP: Lys-223 and Gly-241. Lys-223 is a binding site for AMP. Lys-223 serves as a coordination point for ATP. Gly-241 contributes to the CDP binding site. Ala-242 and Ala-314 together coordinate AMP. ATP is bound by residues Ala-242 and Ala-314. Ala-314 and Asn-338 together coordinate ADP. Residues Gly-339 and Phe-344 each contribute to the CDP site. Residues Phe-344, Glu-345, Asp-377, and Ser-378 each coordinate ADP. Glu-345 serves as a coordination point for AMP. Glu-345, Asp-377, and Ser-378 together coordinate ATP. Residue Asp-377 participates in Mg(2+) binding.

The protein belongs to the phosphoglycerate kinase family. Monomer. It depends on Mg(2+) as a cofactor.

It localises to the cytoplasm. It carries out the reaction (2R)-3-phosphoglycerate + ATP = (2R)-3-phospho-glyceroyl phosphate + ADP. It functions in the pathway carbohydrate degradation; glycolysis; pyruvate from D-glyceraldehyde 3-phosphate: step 2/5. This Trypanosoma congolense protein is Phosphoglycerate kinase, cytosolic (C1PGK).